An 878-amino-acid polypeptide reads, in one-letter code: Calcium-transporting ATPase 1 (878 aa).

Helical transmembrane passes span 50 to 72 (LFID…VQLF), 76 to 95 (FVES…VAVV), 243 to 263 (LGWV…LRLF), and 281 to 301 (FAVA…VTIV). The Ca(2+) site is built by Val-287, Ala-288, Ile-290, and Glu-292. Catalysis depends on Asp-334, which acts as the 4-aspartylphosphate intermediate. Transmembrane regions (helical) follow at residues 681–701 (LFSG…VGWV), 704–724 (FTAL…AIAL), 753–773 (VILI…YVGQ), 779–799 (MGVA…TFAA), 816–836 (YVLM…LPFL), and 845–865 (AFGW…VICM). Positions 713 and 717 each coordinate Ca(2+).

Belongs to the cation transport ATPase (P-type) (TC 3.A.3) family. Type IIA subfamily.

The protein localises to the cell membrane. It catalyses the reaction Ca(2+)(in) + ATP + H2O = Ca(2+)(out) + ADP + phosphate + H(+). Inhibited by very high concentrations of cyclopiazonic acid (CPA). Catalyzes the hydrolysis of ATP coupled with the transport of calcium. In Lactococcus lactis subsp. lactis (strain IL1403) (Streptococcus lactis), this protein is Calcium-transporting ATPase 1 (yoaB).